The sequence spans 300 residues: Putative S-adenosyl-L-methionine-dependent methyltransferase Mkms_0379 (300 aa).

S-adenosyl-L-methionine contacts are provided by residues Asp-128 and 157–158 (DL).

The protein belongs to the UPF0677 family.

Exhibits S-adenosyl-L-methionine-dependent methyltransferase activity. This Mycobacterium sp. (strain KMS) protein is Putative S-adenosyl-L-methionine-dependent methyltransferase Mkms_0379.